Here is a 972-residue protein sequence, read N- to C-terminus: Optomotor-blind protein (972 aa).

Disordered regions lie at residues Ser-44–Ala-248, Pro-263–His-286, Ala-508–Ala-563, Ala-645–Pro-676, Ala-805–Leu-889, and Glu-918–Gln-972. Composition is skewed to low complexity over residues Gly-49–Asn-80 and Ser-97–Ser-142. A compositionally biased stretch (pro residues) spans Pro-155–Asn-176. Low complexity-rich tracts occupy residues Asn-177 to His-193 and Ala-201 to Pro-212. A compositionally biased stretch (pro residues) spans Pro-213–Pro-225. Residues His-226–His-237 are compositionally biased toward low complexity. Basic residues predominate over residues Pro-274 to His-286. Residues Leu-332–Asp-513 constitute a DNA-binding region (T-box). Residues Pro-818–Val-831 show a composition bias toward gly residues. Residues Pro-835–Pro-851 are compositionally biased toward low complexity. Residue Ser-887 is modified to Phosphoserine. A compositionally biased stretch (basic residues) spans His-952–His-963.

As to expression, in third-instar larvae, expressed in the brain region that will develop into optic lobes and more weakly in the thoracic part of the ventral ganglion.

Its subcellular location is the nucleus. Essential protein that may function as a transcription regulator. Vital for pupal development. Required for proper development of the optic lobes and wings, and abdominal pigmentation. This is Optomotor-blind protein (bi) from Drosophila melanogaster (Fruit fly).